The primary structure comprises 282 residues: uncharacterized protein (282 aa).

Positions 4–80 (STLTSKLESL…VDYLSDEKQY (77 aa)) constitute an HTH rpiR-type domain. The segment at residues 40-59 (VAELAQAAGVSSASVIRFTR) is a DNA-binding region (H-T-H motif). Positions 125 to 265 (IAQKIVEAKR…FFKYLTLTNE (141 aa)) constitute an SIS domain.

This is an uncharacterized protein from Providencia stuartii.